The following is a 281-amino-acid chain: Hepatitis A virus cellular receptor 2 homolog (281 aa).

The first 19 residues, 1 to 19, serve as a signal peptide directing secretion; that stretch reads MFSGLTLNCVLLLLQLLLA. Positions 20 to 125 constitute an Ig-like V-type domain; that stretch reads RSLENAYVFE…PGLMNDKKLE (106 aa). The Extracellular segment spans residues 20-193; that stretch reads RSLENAYVFE…KDSGETIRTA (174 aa). 3 cysteine pairs are disulfide-bonded: Cys-38–Cys-111, Cys-52–Cys-63, and Cys-58–Cys-110. 2 residues coordinate a 1,2-diacyl-sn-glycero-3-phospho-L-serine: Ser-61 and Gln-62. N-linked (GlcNAc...) asparagine glycosylation is found at Asn-74 and Asn-100. An a 1,2-diacyl-sn-glycero-3-phospho-L-serine-binding site is contributed by Arg-112. Residues Phe-115 and Gly-117 each coordinate Ca(2+). Position 119 (Met-119) interacts with a 1,2-diacyl-sn-glycero-3-phospho-L-serine. Asn-120 serves as a coordination point for Ca(2+). The interval 139 to 160 is disordered; sequence QTAHGDSTTASPRTLTTERNGS. The O-linked (GalNAc...) threonine glycan is linked to Thr-146. Asn-172 carries N-linked (GlcNAc...) asparagine glycosylation. The chain crosses the membrane as a helical span at residues 194–214; it reads IHIGVGVSAGLTLALIIGVLI. Residues 215-281 are Cytoplasmic-facing; it reads LKWYSCKKKK…YCYVNSQQPS (67 aa). The segment at 252–270 is interaction with BAG6; that stretch reads EENIYTIEENVYEVENSNE. Tyr-256 is modified (phosphotyrosine; by ITK).

It belongs to the immunoglobulin superfamily. TIM family. As to quaternary structure, interacts with HMGB1; impairs HMGB1 binding to B-DNA and likely HMGB1-mediated innate immune response. Interacts with BAG6. Interacts (phosphorylated) with PIK3R1 and PIK3R2. Interacts (not dependent on its phosphorylation status) with FYN. Interacts (in basal state T-cells) with VAV1; AKT1/2, LCP2, ZAP70, SYK, PIK3R1, FYN, SH3BP2 and SH2D2A. Interacts (in activated T-cells) with LCK and PLCG. Interacts with ILF3; this interaction promotes ILF3 ubiquitination and degradation. Phosphorylated on tyrosine residues; modestly increased after TCR/CD28 stimulation. Can be phosphorylated in the cytoplasmic domain by FYN. Phosphorylation at Tyr-256 is increased by stimulation with ligand LGALS9. In terms of processing, N-glycosylated. As to expression, expressed in T-helper type 1 lymphocytes. Not expressed by naive T-cells but up-regulated as they differentiate into T-helper-1 cells. Also expressed by differentiated type 1 CD8+ cytotoxic T-cells. Expressed on peritoneal exudate macrophages, monocytes, and splenic dendritic cells (DCs). Expression on natural killer (NK) cells is inversely associated with IFN-gamma production during the initial 24 hours of LPS-induced endotoxic shock. Expressed on mast cells.

The protein resides in the membrane. Its subcellular location is the cell junction. It is found in the secreted. Its function is as follows. Cell surface receptor implicated in modulating innate and adaptive immune responses. Generally accepted to have an inhibiting function. Reports on stimulating functions suggest that the activity may be influenced by the cellular context and/or the respective ligand. Regulates macrophage activation. Inhibits T-helper type 1 lymphocyte (Th1)-mediated auto- and alloimmune responses and promotes immunological tolerance. In CD8+ cells attenuates TCR-induced signaling, specifically by blocking NF-kappaB and NFAT promoter activities resulting in the loss of IL-2 secretion. The function may implicate its association with LCK proposed to impair phosphorylation of TCR subunits. In contrast, shown to activate TCR-induced signaling in T-cells probably implicating ZAP70, LCP2, LCK and FYN. Expressed on Treg cells can inhibit Th17 cell responses. Receptor for LGALS9. Binding to LGALS9 is believed to result in suppression of T-cell responses; the resulting apoptosis of antigen-specific cells may implicate HAVCR2 phosphorylation and disruption of its association with BAG6. Binding to LGALS9 is proposed to be involved in innate immune response to intracellular pathogens. Expressed on Th1 cells interacts with LGALS9 expressed on Mycobacterium tuberculosis-infected macrophages to stimulate antibactericidal activity including IL-1 beta secretion and to restrict intracellular bacterial growth. However, the function as receptor for LGALS9 has been challenged. Also reported to enhance CD8+ T-cell responses to an acute infection such as by Listeria monocytogenes. Receptor for phosphatidylserine (PtSer); PtSer-binding is calcium-dependent. May recognize PtSer on apoptotic cells leading to their phagocytosis. Mediates the engulfment of apoptotic cells by dendritic cells. Expressed on T-cells, promotes conjugation but not engulfment of apoptotic cells. Expressed on dendritic cells (DCs) positively regulates innate immune response and in synergy with Toll-like receptors promotes secretion of TNF-alpha. In tumor-imfiltrating DCs suppresses nucleic acid-mediated innate immune repsonse by interaction with HMGB1 and interfering with nucleic acid-sensing and trafficking of nucleid acids to endosomes. Can enhance mast cell production of Th2 cytokines Il-4, IL-6 and IL-13. Expressed on natural killer (NK) cells acts as a coreceptor to enhance IFN-gamma production in response to LGALS9. In contrast, shown to suppress NK cell-mediated cytotoxicity. Negatively regulates NK cell function in LPS-induced endotoxic shock. This is Hepatitis A virus cellular receptor 2 homolog (Havcr2) from Mus musculus (Mouse).